A 699-amino-acid chain; its full sequence is Elongation factor G (699 aa).

Positions 8-288 constitute a tr-type G domain; sequence EDYRNFGIMA…AVVDYLPSPI (281 aa). GTP-binding positions include 17–24, 86–90, and 140–143; these read AHIDAGKT, DTPGH, and NKMD.

The protein belongs to the TRAFAC class translation factor GTPase superfamily. Classic translation factor GTPase family. EF-G/EF-2 subfamily.

The protein resides in the cytoplasm. In terms of biological role, catalyzes the GTP-dependent ribosomal translocation step during translation elongation. During this step, the ribosome changes from the pre-translocational (PRE) to the post-translocational (POST) state as the newly formed A-site-bound peptidyl-tRNA and P-site-bound deacylated tRNA move to the P and E sites, respectively. Catalyzes the coordinated movement of the two tRNA molecules, the mRNA and conformational changes in the ribosome. The chain is Elongation factor G from Sinorhizobium fredii (strain NBRC 101917 / NGR234).